A 116-amino-acid chain; its full sequence is Large ribosomal subunit protein uL18 (116 aa).

The protein belongs to the universal ribosomal protein uL18 family. In terms of assembly, part of the 50S ribosomal subunit; part of the 5S rRNA/L5/L18/L25 subcomplex. Contacts the 5S and 23S rRNAs.

Functionally, this is one of the proteins that bind and probably mediate the attachment of the 5S RNA into the large ribosomal subunit, where it forms part of the central protuberance. The sequence is that of Large ribosomal subunit protein uL18 from Marinomonas sp. (strain MWYL1).